A 770-amino-acid chain; its full sequence is U3 small nucleolar RNA-associated protein 14 homolog A (770 aa).

Residues Met-1 to Gln-17 are compositionally biased toward polar residues. A disordered region spans residues Met-1–Arg-65. A phosphoserine mark is found at Ser-30, Ser-32, and Ser-53. Residues Glu-41 to Ala-68 adopt a coiled-coil conformation. The span at Gly-56–Arg-65 shows a compositional bias: basic and acidic residues. 2 positions are modified to phosphoserine: Ser-78 and Ser-82. Thr-206 bears the Phosphothreonine mark. Coiled coils occupy residues Ser-217 to Arg-291 and Leu-318 to Gly-348. 3 disordered regions span residues Leu-334 to Asp-361, Lys-392 to Glu-455, and Leu-467 to Arg-505. Composition is skewed to acidic residues over residues Glu-343 to Leu-358 and Asp-396 to Glu-410. Residues Ser-406 and Ser-408 each carry the phosphoserine modification. Residues Glu-411–His-444 show a composition bias toward basic and acidic residues. Lys-449 is covalently cross-linked (Glycyl lysine isopeptide (Lys-Gly) (interchain with G-Cter in SUMO2)). The residue at position 453 (Ser-453) is a Phosphoserine. Ser-567 carries the post-translational modification Phosphoserine. The residue at position 588 (Arg-588) is a Citrulline. Residue Lys-732 forms a Glycyl lysine isopeptide (Lys-Gly) (interchain with G-Cter in SUMO2) linkage.

Belongs to the UTP14 family. In terms of assembly, interacts with DHX37. Post-translationally, citrullinated by PADI4.

Its subcellular location is the nucleus. It localises to the nucleolus. Its function is as follows. May be required for ribosome biogenesis. In Bos taurus (Bovine), this protein is U3 small nucleolar RNA-associated protein 14 homolog A (UTP14A).